The primary structure comprises 316 residues: C1GALT1-specific chaperone 1 (316 aa).

Topologically, residues 1–6 (MLSESS) are cytoplasmic. Residues 7-26 (SFLKGVMLGSIFCALITMLG) traverse the membrane as a helical; Signal-anchor for type II membrane protein segment. The Lumenal segment spans residues 27–316 (HIRIGNRMHH…FLPPNGSEND (290 aa)).

This sequence belongs to the glycosyltransferase 31 family. Beta3-Gal-T subfamily. In terms of assembly, associates with core 1 beta-3-galactosyltransferase (C1GALT1), probably not with the soluble active form.

The protein localises to the membrane. In terms of biological role, probable chaperone required for the generation of 1 O-glycan Gal-beta1-3GalNAc-alpha1-Ser/Thr (T antigen), which is a precursor for many extended O-glycans in glycoproteins. Probably acts as a specific molecular chaperone assisting the folding/stability of core 1 beta-3-galactosyltransferase (C1GALT1). The protein is C1GALT1-specific chaperone 1 (C1galt1c1) of Mus musculus (Mouse).